An 866-amino-acid chain; its full sequence is Interleukin-17 receptor A (866 aa).

A signal peptide spans 1 to 32; sequence MGAARSPPSAVPGPLLGLLLLLLGVLAPGGAS. The Extracellular segment spans residues 33-320; that stretch reads LRLLDHRALV…EPIPDYMPLW (288 aa). A disulfide bridge links cysteine 43 with cysteine 50. Asparagine 49, asparagine 54, and asparagine 67 each carry an N-linked (GlcNAc...) asparagine glycan. 2 disulfides stabilise this stretch: cysteine 57-cysteine 126 and cysteine 185-cysteine 196. N-linked (GlcNAc...) asparagine glycans are attached at residues asparagine 206, asparagine 225, asparagine 242, and asparagine 265. Cystine bridges form between cysteine 245-cysteine 276, cysteine 277-cysteine 303, and cysteine 290-cysteine 294. Residues 321–341 traverse the membrane as a helical segment; that stretch reads VYWFITGISILLVGSVILLIV. Over 342-866 the chain is Cytoplasmic; the sequence is CMTWRLAGPG…MGSESEGPSA (525 aa). Residues 377–534 form the SEFIR domain; sequence PRKVWIIYSA…LMDRFEEVYF (158 aa). Serine 708 and serine 736 each carry phosphoserine. Disordered stretches follow at residues 717–736 and 773–840; these read LFLP…PMAS and MVLT…RSLQ. Polar residues predominate over residues 788 to 801; that stretch reads QSVQSDQGYISRSS. Positions 809-819 are enriched in acidic residues; sequence TEMEEEEEEEQ.

As to quaternary structure, forms heterodimers with IL17RC; the heterodimer binds IL17A and IL17F homodimers as well as the heterodimer formed by IL17A and IL17F. Forms complexes with 2:1 binding stoichiometry: two receptor chains for one interleukin molecule. IL17A homodimer preferentially drives the formation of IL17RA-IL17RC heterodimeric receptor complex, whereas IL17F homodimer forms predominantly complexes with IL17RC homodimer. IL17A homodimer adopts an asymmetrical ternary structure with one IL17RA molecule, allowing for high affinity interactions of one IL17A monomer with one IL17RA molecule (via D1 and D2 domains), while disfavoring binding of a second IL17RA molecule on the other IL17A monomer. IL17A-IL17F forms complexes with IL17RA-IL17RC, but with lower affinity when compared to IL17A homodimer. IL17RA chain cannot distinguish between IL17A and IL17F molecules, potentially enabling the formation of topologically distinct complexes. Interacts with TRAF3IP2. Forms heterodimers with IL17RE; the heterodimer binds IL17C. In terms of assembly, (Microbial infection) Interacts with SARS coronavirus-2/SARS-CoV-2 virus protein ORF8. Glycosylated. As to expression, widely expressed.

The protein localises to the cell membrane. Its subcellular location is the secreted. Functionally, receptor for IL17A and IL17F, major effector cytokines of innate and adaptive immune system involved in antimicrobial host defense and maintenance of tissue integrity. Receptor for IL17A. Receptor for IL17F. Binds to IL17A with higher affinity than to IL17F. Binds IL17A and IL17F homodimers as part of a heterodimeric complex with IL17RC. Also binds heterodimers formed by IL17A and IL17F as part of a heterodimeric complex with IL17RC. Cytokine binding triggers homotypic interaction of IL17RA and IL17RC chains with TRAF3IP2 adapter, leading to TRAF6-mediated activation of NF-kappa-B and MAPkinase pathways, ultimately resulting in transcriptional activation of cytokines, chemokines, antimicrobial peptides and matrix metalloproteinases, with potential strong immune inflammation. Involved in antimicrobial host defense primarily promoting neutrophil activation and recruitment at infection sites to destroy extracellular bacteria and fungi. In secondary lymphoid organs, contributes to germinal center formation by regulating the chemotactic response of B cells to CXCL12 and CXCL13, enhancing retention of B cells within the germinal centers, B cell somatic hypermutation rate and selection toward plasma cells. Plays a role in the maintenance of the integrity of epithelial barriers during homeostasis and pathogen infection. Stimulates the production of antimicrobial beta-defensins DEFB1, DEFB103A, and DEFB104A by mucosal epithelial cells, limiting the entry of microbes through the epithelial barriers. Involved in antiviral host defense through various mechanisms. Enhances immunity against West Nile virus by promoting T cell cytotoxicity. Contributes to Influenza virus clearance by driving the differentiation of B-1a B cells, providing for production of virus-specific IgM antibodies at first line of host defense. Receptor for IL17C as part of a heterodimeric complex with IL17RE. (Microbial infection) Receptor for SARS coronavirus-2/SARS-CoV-2 virus protein ORF8, leading to IL17 pathway activation and an increased secretion of pro-inflammatory factors through activating NF-kappa-B signaling pathway. In Homo sapiens (Human), this protein is Interleukin-17 receptor A.